We begin with the raw amino-acid sequence, 267 residues long: Tryptophan synthase alpha chain (267 aa).

Catalysis depends on proton acceptor residues Glu43 and Asp54.

This sequence belongs to the TrpA family. In terms of assembly, tetramer of two alpha and two beta chains.

The catalysed reaction is (1S,2R)-1-C-(indol-3-yl)glycerol 3-phosphate + L-serine = D-glyceraldehyde 3-phosphate + L-tryptophan + H2O. It participates in amino-acid biosynthesis; L-tryptophan biosynthesis; L-tryptophan from chorismate: step 5/5. In terms of biological role, the alpha subunit is responsible for the aldol cleavage of indoleglycerol phosphate to indole and glyceraldehyde 3-phosphate. The polypeptide is Tryptophan synthase alpha chain (Bacillus licheniformis (strain ATCC 14580 / DSM 13 / JCM 2505 / CCUG 7422 / NBRC 12200 / NCIMB 9375 / NCTC 10341 / NRRL NRS-1264 / Gibson 46)).